A 231-amino-acid polypeptide reads, in one-letter code: Histidine biosynthesis bifunctional protein HisIE (231 aa).

Residues 1–130 are phosphoribosyl-AMP cyclohydrolase; the sequence is MQDVFRQIDW…QKYPIGVYHI (130 aa). The segment at 131–231 is phosphoribosyl-ATP pyrophosphohydrolase; the sequence is LDDLYHIIEQ…GIEEKASRKH (101 aa).

This sequence in the N-terminal section; belongs to the PRA-CH family. It in the C-terminal section; belongs to the PRA-PH family.

It is found in the cytoplasm. The catalysed reaction is 1-(5-phospho-beta-D-ribosyl)-ATP + H2O = 1-(5-phospho-beta-D-ribosyl)-5'-AMP + diphosphate + H(+). The enzyme catalyses 1-(5-phospho-beta-D-ribosyl)-5'-AMP + H2O = 1-(5-phospho-beta-D-ribosyl)-5-[(5-phospho-beta-D-ribosylamino)methylideneamino]imidazole-4-carboxamide. It participates in amino-acid biosynthesis; L-histidine biosynthesis; L-histidine from 5-phospho-alpha-D-ribose 1-diphosphate: step 2/9. It functions in the pathway amino-acid biosynthesis; L-histidine biosynthesis; L-histidine from 5-phospho-alpha-D-ribose 1-diphosphate: step 3/9. This Helicobacter hepaticus (strain ATCC 51449 / 3B1) protein is Histidine biosynthesis bifunctional protein HisIE.